We begin with the raw amino-acid sequence, 235 residues long: Transmembrane protein 215 (235 aa).

The next 2 helical transmembrane spans lie at 12–32 and 40–60; these read LVVA…VSGM and IPLL…IALA. The disordered stretch occupies residues 99–145; the sequence is SDLESGKGSSDELAKKAGLRGKPPPQSQGEVSVASSINSPTPTEEGE. Positions 125-140 are enriched in polar residues; that stretch reads SQGEVSVASSINSPTP.

The protein resides in the membrane. This Homo sapiens (Human) protein is Transmembrane protein 215 (TMEM215).